We begin with the raw amino-acid sequence, 598 residues long: Probable translation initiation factor IF-2 (598 aa).

Residues 3 to 223 (LRCPIVSVLG…ISGLAQRFME (221 aa)) enclose the tr-type G domain. A G1 region spans residues 12–19 (GHVDHGKT). A GTP-binding site is contributed by 12–19 (GHVDHGKT). The tract at residues 37–41 (GITQH) is G2. The tract at residues 76 to 79 (DTPG) is G3. GTP is bound by residues 76–80 (DTPGH) and 130–133 (NKID). Residues 130 to 133 (NKID) form a G4 region. Residues 200-202 (SAM) form a G5 region.

This sequence belongs to the TRAFAC class translation factor GTPase superfamily. Classic translation factor GTPase family. IF-2 subfamily.

Functionally, function in general translation initiation by promoting the binding of the formylmethionine-tRNA to ribosomes. Seems to function along with eIF-2. The protein is Probable translation initiation factor IF-2 of Methanococcus aeolicus (strain ATCC BAA-1280 / DSM 17508 / OCM 812 / Nankai-3).